We begin with the raw amino-acid sequence, 688 residues long: GTPase IMAP family member 8 (688 aa).

A compositionally biased stretch (low complexity) spans 1 to 14 (MATSSHQGAAAGSQ). The tract at residues 1-42 (MATSSHQGAAAGSQAEHRSCEASVGQGERPSASQGQEGNFKQ) is disordered. A compositionally biased stretch (polar residues) spans 31–42 (SASQGQEGNFKQ). AIG1-type G domains are found at residues 46–247 (TSTL…MESS), 282–472 (MPEL…VIRE), and 473–677 (KELL…GQLK). Residues 55 to 62 (GKQGAGKS) form a G1 region. Residues 55–63 (GKQGAGKSA) and S76 each bind GTP. The tract at residues 82-86 (MVTDR) is G2. Residues 103 to 106 (DTPD) form a G3 region. A G4 region spans residues 172–175 (TRED). GTP contacts are provided by residues 173–175 (RED) and N209. Residues 208–210 (NNK) are G5.

Belongs to the TRAFAC class TrmE-Era-EngA-EngB-Septin-like GTPase superfamily. AIG1/Toc34/Toc159-like paraseptin GTPase family. IAN subfamily. Abundantly expressed in the thymus (in thymocytes), spleen (in splenocytes), lymph node, followed by bone marrow and lung.

Its subcellular location is the endoplasmic reticulum. The protein localises to the golgi apparatus. The protein resides in the mitochondrion. It localises to the cytoplasm. It is found in the cytosol. Its function is as follows. Exerts an anti-apoptotic effect in the immune system and is involved in responses to infections. The chain is GTPase IMAP family member 8 (Gimap8) from Mus musculus (Mouse).